Reading from the N-terminus, the 341-residue chain is Platelet-activating factor receptor (341 aa).

Residues 1–16 are Extracellular-facing; the sequence is MEQNGSFRVDSEFRYT. Asn4 is a glycosylation site (N-linked (GlcNAc...) asparagine). A helical transmembrane segment spans residues 17 to 38; the sequence is LFPIVYSVIFVLGVVANGYVLW. The Cytoplasmic segment spans residues 39-54; it reads VFATLYPSKKLNEIKI. Residues 55 to 74 traverse the membrane as a helical segment; it reads FMVNLTVADLLFLMTLPLWI. The Extracellular segment spans residues 75–91; sequence VYYSNEGDWIVHKFLCN. Cys90 and Cys173 are oxidised to a cystine. A helical transmembrane segment spans residues 92-113; that stretch reads LAGCLFFINTYCSVAFLGVITY. Over 114–133 the chain is Cytoplasmic; that stretch reads NRYQAVAYPIKTAQATTRKR. Residues 134 to 155 form a helical membrane-spanning segment; sequence GITLSLVIWISIAATASYFLAT. The Extracellular portion of the chain corresponds to 156 to 184; it reads DSTNVVPKKDGSGNITRCFEHYEPYSVPI. Asn169 is a glycosylation site (N-linked (GlcNAc...) asparagine). Residues 185 to 205 form a helical membrane-spanning segment; it reads LVVHIFITSCFFLVFFLIFYC. The Cytoplasmic segment spans residues 206–233; the sequence is NMVIIHTLLTRPVRQQRKPEVKRRALWM. Residues 234–254 form a helical membrane-spanning segment; that stretch reads VCTVLAVFVICFVPHHVVQLP. The Extracellular portion of the chain corresponds to 255–275; that stretch reads WTLAELGYQTNFHQAINDAHQ. A helical membrane pass occupies residues 276-295; sequence ITLCLLSTNCVLDPVIYCFL. The Cytoplasmic portion of the chain corresponds to 296-341; sequence TKKFRKHLSEKFYSMRSSRKCSRATSDTCTEVMMPANQTPVLPLKN.

The protein belongs to the G-protein coupled receptor 1 family. Interacts with ARRB1. As to expression, present in almost all organs including spleen, small intestine, kidney, lung, liver and brain.

It localises to the cell membrane. Its function is as follows. Receptor for platelet activating factor, a chemotactic phospholipid mediator that possesses potent inflammatory, smooth-muscle contractile and hypotensive activity. Seems to mediate its action via a G protein that activates a phosphatidylinositol-calcium second messenger system. The sequence is that of Platelet-activating factor receptor (Ptafr) from Rattus norvegicus (Rat).